A 159-amino-acid chain; its full sequence is NADH dehydrogenase [ubiquinone] 1 beta subcomplex subunit 10 (159 aa).

This sequence belongs to the complex I NDUFB10 subunit family. In terms of assembly, complex I is composed of 45 different subunits.

It is found in the mitochondrion inner membrane. Accessory subunit of the mitochondrial membrane respiratory chain NADH dehydrogenase (Complex I), that is believed not to be involved in catalysis. Complex I functions in the transfer of electrons from NADH to the respiratory chain. The immediate electron acceptor for the enzyme is believed to be ubiquinone. The chain is NADH dehydrogenase [ubiquinone] 1 beta subcomplex subunit 10 from Bombyx mori (Silk moth).